A 38-amino-acid polypeptide reads, in one-letter code: Large ribosomal subunit protein bL36 (38 aa).

This sequence belongs to the bacterial ribosomal protein bL36 family.

The polypeptide is Large ribosomal subunit protein bL36 (Roseiflexus sp. (strain RS-1)).